The primary structure comprises 262 residues: Polyamine aminopropyltransferase (262 aa).

In terms of domain architecture, PABS spans 1 to 249; that stretch reads MWITQEITPY…DIHRAAFALP (249 aa). N29 is a binding site for S-methyl-5'-thioadenosine. D83 serves as a coordination point for spermidine. D155 serves as the catalytic Proton acceptor.

Belongs to the spermidine/spermine synthase family. In terms of assembly, homodimer or homotetramer.

The protein resides in the cytoplasm. The catalysed reaction is S-adenosyl 3-(methylsulfanyl)propylamine + putrescine = S-methyl-5'-thioadenosine + spermidine + H(+). Its pathway is amine and polyamine biosynthesis; spermidine biosynthesis; spermidine from putrescine: step 1/1. Its function is as follows. Catalyzes the irreversible transfer of a propylamine group from the amino donor S-adenosylmethioninamine (decarboxy-AdoMet) to putrescine (1,4-diaminobutane) to yield spermidine. The sequence is that of Polyamine aminopropyltransferase from Helicobacter pylori (strain P12).